We begin with the raw amino-acid sequence, 309 residues long: Serine/threonine-protein phosphatase 4 catalytic subunit (309 aa).

The Mn(2+) site is built by Asp-52, His-54, Asp-80, and Asn-112. His-113 serves as the catalytic Proton donor. Positions 162 and 236 each coordinate Mn(2+). Leu-309 carries the leucine methyl ester modification.

The protein belongs to the PPP phosphatase family. PP-4 (PP-X) subfamily. In terms of assembly, catalytic subunit of the histone H2A phosphatase complex (HTP-C) containing PPH3, PSY2 and PSY4. Mn(2+) is required as a cofactor.

It is found in the cytoplasm. The protein localises to the nucleus. The enzyme catalyses O-phospho-L-seryl-[protein] + H2O = L-seryl-[protein] + phosphate. It carries out the reaction O-phospho-L-threonyl-[protein] + H2O = L-threonyl-[protein] + phosphate. In terms of biological role, forms the histone H2A phosphatase complex in association with the regulatory subunits PSY2 and PSY4, which dephosphorylates H2AS128ph (gamma-H2A) that has been displaced from sites of DNA lesions in the double-stranded DNA break repair process. Dephosphorylation is necessary for efficient recovery from the DNA damage checkpoint. The sequence is that of Serine/threonine-protein phosphatase 4 catalytic subunit (PPH3) from Candida glabrata (strain ATCC 2001 / BCRC 20586 / JCM 3761 / NBRC 0622 / NRRL Y-65 / CBS 138) (Yeast).